Here is a 138-residue protein sequence, read N- to C-terminus: Putative pre-16S rRNA nuclease (138 aa).

The protein belongs to the YqgF nuclease family.

It is found in the cytoplasm. In terms of biological role, could be a nuclease involved in processing of the 5'-end of pre-16S rRNA. This Geobacillus kaustophilus (strain HTA426) protein is Putative pre-16S rRNA nuclease.